We begin with the raw amino-acid sequence, 229 residues long: Ribonuclease 3 (229 aa).

Residues 5 to 127 (LSRLERQLGY…LIGAIYLDAG (123 aa)) enclose the RNase III domain. Glu40 is a binding site for Mg(2+). Asp44 is an active-site residue. Positions 113 and 116 each coordinate Mg(2+). Glu116 is an active-site residue. The DRBM domain maps to 154–224 (DPKTRLQEFL…AAAALIALGV (71 aa)).

This sequence belongs to the ribonuclease III family. Homodimer. Mg(2+) serves as cofactor.

Its subcellular location is the cytoplasm. It carries out the reaction Endonucleolytic cleavage to 5'-phosphomonoester.. Functionally, digests double-stranded RNA. Involved in the processing of primary rRNA transcript to yield the immediate precursors to the large and small rRNAs (23S and 16S). Processes some mRNAs, and tRNAs when they are encoded in the rRNA operon. Processes pre-crRNA and tracrRNA of type II CRISPR loci if present in the organism. The polypeptide is Ribonuclease 3 (Pseudomonas syringae pv. tomato (strain ATCC BAA-871 / DC3000)).